A 379-amino-acid chain; its full sequence is Chaperone protein DnaJ (379 aa).

Positions 5–69 (EYYERLGVDK…QKRAAYDQYG (65 aa)) constitute a J domain. The segment at 141–223 (GVEKQVKYNR…CHGSGHEKVA (83 aa)) adopts a CR-type zinc-finger fold. Cysteine 154, cysteine 157, cysteine 171, cysteine 174, cysteine 197, cysteine 200, cysteine 211, and cysteine 214 together coordinate Zn(2+). 4 CXXCXGXG motif repeats span residues 154-161 (CHTCDGSG), 171-178 (CHKCGGRG), 197-204 (CDVCHGTG), and 211-218 (CTTCHGSG).

This sequence belongs to the DnaJ family. In terms of assembly, homodimer. Zn(2+) is required as a cofactor.

Its subcellular location is the cytoplasm. Its function is as follows. Participates actively in the response to hyperosmotic and heat shock by preventing the aggregation of stress-denatured proteins and by disaggregating proteins, also in an autonomous, DnaK-independent fashion. Unfolded proteins bind initially to DnaJ; upon interaction with the DnaJ-bound protein, DnaK hydrolyzes its bound ATP, resulting in the formation of a stable complex. GrpE releases ADP from DnaK; ATP binding to DnaK triggers the release of the substrate protein, thus completing the reaction cycle. Several rounds of ATP-dependent interactions between DnaJ, DnaK and GrpE are required for fully efficient folding. Also involved, together with DnaK and GrpE, in the DNA replication of plasmids through activation of initiation proteins. This Lactococcus lactis subsp. cremoris (strain SK11) protein is Chaperone protein DnaJ.